The primary structure comprises 276 residues: Large ribosomal subunit protein uL2 (276 aa).

Residues 224 to 265 (GTAMNPIDHPHGGGEGKNFGKHPVSPWGVQTKGKRTRSNKRT) form a disordered region.

The protein belongs to the universal ribosomal protein uL2 family. In terms of assembly, part of the 50S ribosomal subunit. Forms a bridge to the 30S subunit in the 70S ribosome.

One of the primary rRNA binding proteins. Required for association of the 30S and 50S subunits to form the 70S ribosome, for tRNA binding and peptide bond formation. It has been suggested to have peptidyltransferase activity; this is somewhat controversial. Makes several contacts with the 16S rRNA in the 70S ribosome. This Blochmanniella floridana protein is Large ribosomal subunit protein uL2.